Consider the following 257-residue polypeptide: Dihydroorotate dehydrogenase B (NAD(+)), electron transfer subunit (257 aa).

Positions 2 to 102 constitute an FAD-binding FR-type domain; sequence IGRERMTVAS…LGPLGNGFPL (101 aa). FAD contacts are provided by residues 53–56, 70–72, and 77–78; these read RPLS, IYR, and GT. The [2Fe-2S] cluster site is built by cysteine 221, cysteine 226, cysteine 229, and cysteine 244.

It belongs to the PyrK family. Heterotetramer of 2 PyrK and 2 PyrD type B subunits. [2Fe-2S] cluster serves as cofactor. FAD is required as a cofactor.

Its pathway is pyrimidine metabolism; UMP biosynthesis via de novo pathway; orotate from (S)-dihydroorotate (NAD(+) route): step 1/1. Responsible for channeling the electrons from the oxidation of dihydroorotate from the FMN redox center in the PyrD type B subunit to the ultimate electron acceptor NAD(+). This chain is Dihydroorotate dehydrogenase B (NAD(+)), electron transfer subunit, found in Geobacillus kaustophilus (strain HTA426).